The primary structure comprises 644 residues: Macrolide export ATP-binding/permease protein MacB (644 aa).

One can recognise an ABC transporter domain in the interval 6-244 (LELDGVWRRF…SQATEAQPDG (239 aa)). Position 42–49 (42–49 (GASGSGKS)) interacts with ATP. The next 5 membrane-spanning stretches (helical) occupy residues 271 to 291 (ALTM…IAIG), 415 to 435 (EAVG…GVVA), 517 to 537 (LSLL…IGVM), 574 to 594 (LVCL…SFVF), and 609 to 629 (VIAL…FLPA).

Belongs to the ABC transporter superfamily. Macrolide exporter (TC 3.A.1.122) family. As to quaternary structure, homodimer.

The protein localises to the cell inner membrane. In terms of biological role, non-canonical ABC transporter that contains transmembrane domains (TMD), which form a pore in the inner membrane, and an ATP-binding domain (NBD), which is responsible for energy generation. Confers resistance against macrolides. The sequence is that of Macrolide export ATP-binding/permease protein MacB from Chromobacterium violaceum (strain ATCC 12472 / DSM 30191 / JCM 1249 / CCUG 213 / NBRC 12614 / NCIMB 9131 / NCTC 9757 / MK).